The primary structure comprises 183 residues: UPF0340 protein LCA_1354 (183 aa).

Belongs to the UPF0340 family.

In Latilactobacillus sakei subsp. sakei (strain 23K) (Lactobacillus sakei subsp. sakei), this protein is UPF0340 protein LCA_1354.